A 354-amino-acid chain; its full sequence is Uroporphyrinogen decarboxylase (354 aa).

Residues 27-31, phenylalanine 46, aspartate 77, tyrosine 154, threonine 209, and histidine 327 each bind substrate; that span reads RQAGR.

Belongs to the uroporphyrinogen decarboxylase family. Homodimer.

Its subcellular location is the cytoplasm. The catalysed reaction is uroporphyrinogen III + 4 H(+) = coproporphyrinogen III + 4 CO2. Its pathway is porphyrin-containing compound metabolism; protoporphyrin-IX biosynthesis; coproporphyrinogen-III from 5-aminolevulinate: step 4/4. Its function is as follows. Catalyzes the decarboxylation of four acetate groups of uroporphyrinogen-III to yield coproporphyrinogen-III. This chain is Uroporphyrinogen decarboxylase, found in Escherichia coli O157:H7.